The following is a 221-amino-acid chain: MSKPSLELKGASFTLSVLHINSSDLNAVMAELDSKLAQAPQFFLGAPLVVNLSAIQDNDFNLHGLKELLLSRQLVIVGITGATTALSNQAKTLGLAIVKAGKQSVTPPPAPRQTKVLKQNIRSGQQVYAKNGDLIIFGAVGNGAEVIADGSIHIYGALRGKAMAGAAGDSSAVIIAHSLEAELVSIAGQYWLAENLQQHSSDKSGCIRLNGESLIVESLPL.

It belongs to the MinC family. In terms of assembly, interacts with MinD and FtsZ.

In terms of biological role, cell division inhibitor that blocks the formation of polar Z ring septums. Rapidly oscillates between the poles of the cell to destabilize FtsZ filaments that have formed before they mature into polar Z rings. Prevents FtsZ polymerization. This chain is Probable septum site-determining protein MinC, found in Shewanella sp. (strain ANA-3).